Here is a 187-residue protein sequence, read N- to C-terminus: UPF0301 protein YqgE (187 aa).

This sequence belongs to the UPF0301 (AlgH) family.

The chain is UPF0301 protein YqgE from Salmonella agona (strain SL483).